The chain runs to 185 residues: Protein LPA2 (185 aa).

Residues 1-46 (MALQIHSPCSFSTRPYHLFFTTRNPRFAIKCQNSQIESDTTEDPSR) constitute a chloroplast transit peptide. A disordered region spans residues 35–105 (QIESDTTEDP…VFMSEEGAAK (71 aa)). Low complexity predominate over residues 47-75 (SKNSSSSGVGFGSPASSSSPAKKLSAATS). Positions 83–92 (KREVNRRAPV) are enriched in basic and acidic residues. A run of 2 helical transmembrane segments spans residues 115–135 (AFLLTWLGLGIVILIEGIILA) and 152–172 (VYPVFTPSVVLFVAGTTAYGV).

It localises to the plastid. It is found in the chloroplast membrane. The polypeptide is Protein LPA2 (Arabidopsis thaliana (Mouse-ear cress)).